The chain runs to 391 residues: S-adenosylmethionine synthase (391 aa).

The segment at 1–20 (MPRSDYLFTSESVSEGHPDK) is disordered. H17 provides a ligand contact to ATP. D19 provides a ligand contact to Mg(2+). E45 lines the K(+) pocket. 2 residues coordinate L-methionine: E58 and Q102. A flexible loop region spans residues 102-112 (QSADIAQGVDA). Residues 169–171 (DAK), 235–236 (KF), D244, 250–251 (RK), A267, and K271 contribute to the ATP site. D244 provides a ligand contact to L-methionine. K275 contributes to the L-methionine binding site.

Belongs to the AdoMet synthase family. As to quaternary structure, homotetramer; dimer of dimers. Mg(2+) is required as a cofactor. It depends on K(+) as a cofactor.

It localises to the cytoplasm. The enzyme catalyses L-methionine + ATP + H2O = S-adenosyl-L-methionine + phosphate + diphosphate. The protein operates within amino-acid biosynthesis; S-adenosyl-L-methionine biosynthesis; S-adenosyl-L-methionine from L-methionine: step 1/1. In terms of biological role, catalyzes the formation of S-adenosylmethionine (AdoMet) from methionine and ATP. The overall synthetic reaction is composed of two sequential steps, AdoMet formation and the subsequent tripolyphosphate hydrolysis which occurs prior to release of AdoMet from the enzyme. This Methylorubrum populi (strain ATCC BAA-705 / NCIMB 13946 / BJ001) (Methylobacterium populi) protein is S-adenosylmethionine synthase.